We begin with the raw amino-acid sequence, 181 residues long: Probable pyruvoyl-dependent arginine decarboxylase (181 aa).

Serine 43 bears the Pyruvic acid (Ser) mark.

It belongs to the PdaD family. The cofactor is pyruvate.

It catalyses the reaction L-arginine + H(+) = agmatine + CO2. This is Probable pyruvoyl-dependent arginine decarboxylase from Chlorobaculum tepidum (strain ATCC 49652 / DSM 12025 / NBRC 103806 / TLS) (Chlorobium tepidum).